The following is a 110-amino-acid chain: Phosphoribosyl-ATP pyrophosphatase (110 aa).

This sequence belongs to the PRA-PH family.

It is found in the cytoplasm. The enzyme catalyses 1-(5-phospho-beta-D-ribosyl)-ATP + H2O = 1-(5-phospho-beta-D-ribosyl)-5'-AMP + diphosphate + H(+). It participates in amino-acid biosynthesis; L-histidine biosynthesis; L-histidine from 5-phospho-alpha-D-ribose 1-diphosphate: step 2/9. This is Phosphoribosyl-ATP pyrophosphatase from Pseudomonas syringae pv. syringae (strain B728a).